Consider the following 280-residue polypeptide: Bifunctional protein FolD (280 aa).

NADP(+) is bound by residues G165–S167, S190, and I231.

It belongs to the tetrahydrofolate dehydrogenase/cyclohydrolase family. As to quaternary structure, homodimer.

It carries out the reaction (6R)-5,10-methylene-5,6,7,8-tetrahydrofolate + NADP(+) = (6R)-5,10-methenyltetrahydrofolate + NADPH. The catalysed reaction is (6R)-5,10-methenyltetrahydrofolate + H2O = (6R)-10-formyltetrahydrofolate + H(+). Its pathway is one-carbon metabolism; tetrahydrofolate interconversion. Functionally, catalyzes the oxidation of 5,10-methylenetetrahydrofolate to 5,10-methenyltetrahydrofolate and then the hydrolysis of 5,10-methenyltetrahydrofolate to 10-formyltetrahydrofolate. This is Bifunctional protein FolD from Moorella thermoacetica (strain ATCC 39073 / JCM 9320).